The following is a 216-amino-acid chain: Probable GTP-binding protein EngB (216 aa).

An EngB-type G domain is found at 30–204 (SGLEVAFAGR…QMVLAGWLDL (175 aa)). Residues 38–45 (GRSNAGKS), 64–68 (GRTQL), 82–85 (DLPG), 149–152 (TKAD), and 182–185 (LFSA) each bind GTP. Mg(2+) contacts are provided by S45 and T66.

The protein belongs to the TRAFAC class TrmE-Era-EngA-EngB-Septin-like GTPase superfamily. EngB GTPase family. The cofactor is Mg(2+).

In terms of biological role, necessary for normal cell division and for the maintenance of normal septation. The sequence is that of Probable GTP-binding protein EngB from Ectopseudomonas mendocina (strain ymp) (Pseudomonas mendocina).